The chain runs to 46 residues: Mu-hexatoxin-Mg2a (46 aa).

Intrachain disulfides connect C3–C18, C10–C24, C17–C36, C21–C43, and C26–C34.

Belongs to the neurotoxin 02 (plectoxin) family. 02 (plectoxin) subfamily. As to expression, expressed by the venom gland.

It is found in the secreted. In terms of biological role, competes for binding at site 3 of the insect voltage-gated sodium channel (Nav). Insecticidal neurotoxin. Causes temporary paralysis to lepidopteran larvae (10.3 nmol/g) or to crickets (doses from 0.93 to 119 ug/g). Is not toxic to mice when injected intracranially (high doses). The chain is Mu-hexatoxin-Mg2a from Macrothele gigas (Japanese funnel web spider).